The chain runs to 146 residues: Hemoglobin subunit beta-1 (146 aa).

Positions 2–146 (HWTAEEKSAI…VAHALAHRYH (145 aa)) constitute a Globin domain. H63 and H92 together coordinate heme b.

This sequence belongs to the globin family. In terms of assembly, heterotetramer of two alpha chains and two beta chains. In terms of tissue distribution, red blood cells.

Involved in oxygen transport from the lung to the various peripheral tissues. The polypeptide is Hemoglobin subunit beta-1 (Drymarchon melanurus erebennus (Texas indigo snake)).